The following is a 325-amino-acid chain: Melanocortin receptor 5 (325 aa).

Residues 1-37 (MNSSFHLHFLDLGLNTTDGNLSGLSVQNASSLCEDMG) lie on the Extracellular side of the membrane. N-linked (GlcNAc...) asparagine glycosylation is found at Asn-2, Asn-15, Asn-20, and Asn-28. The chain crosses the membrane as a helical span at residues 38 to 61 (IAVEVFLALGLISLLENILVIGAI). At 62–73 (VRNRNLHTPMYF) the chain is on the cytoplasmic side. The helical transmembrane segment at 74-97 (FVGSLAVADMLVSLSNSWETITIY) threads the bilayer. Residues 98–114 (LLTNKHLVMADASVRHL) lie on the Extracellular side of the membrane. The helical transmembrane segment at 115–138 (DNVFDSMICISVVASMCSLLAIAV) threads the bilayer. Topologically, residues 139–155 (DRYVTIFCALRYQRIMT) are cytoplasmic. Residues 156–179 (GRRSGAIIGGIWAFCASCGTVFIV) traverse the membrane as a helical segment. The Extracellular segment spans residues 180–186 (YYESTYV). A helical transmembrane segment spans residues 187–211 (VICLIAMFLTMLLLMASLYTHMFLL). Topologically, residues 212 to 239 (ARTHIRRIATLPGHSSVRQRTGVKGAIT) are cytoplasmic. A helical membrane pass occupies residues 240 to 265 (LAMLLGVFIVCWAPFFLHLILMISCP). Topologically, residues 266–273 (HNLYCSCF) are extracellular. Residues 274 to 297 (MSHFNMYLILIMCNSVIDPLIYAF) form a helical membrane-spanning segment. The Cytoplasmic portion of the chain corresponds to 298–325 (RSQEMRKTFKEIVCFQSFRTPCRFPSRY). A lipid anchor (S-palmitoyl cysteine) is attached at Cys-311.

This sequence belongs to the G-protein coupled receptor 1 family.

It is found in the cell membrane. In terms of biological role, receptor for MSH (alpha, beta and gamma) and ACTH. The activity of this receptor is mediated by G proteins which activate adenylate cyclase. This receptor is a possible mediator of the immunomodulation properties of melanocortins. This is Melanocortin receptor 5 (MC5R) from Bos taurus (Bovine).